The primary structure comprises 34 residues: Photosystem I reaction center subunit XII (34 aa).

A helical membrane pass occupies residues I10–Y32.

Belongs to the PsaM family.

The protein resides in the cellular thylakoid membrane. This chain is Photosystem I reaction center subunit XII, found in Synechococcus sp. (strain RCC307).